Here is a 292-residue protein sequence, read N- to C-terminus: Elongation factor Ts (292 aa).

The involved in Mg(2+) ion dislocation from EF-Tu stretch occupies residues 82–85 (TDFV).

This sequence belongs to the EF-Ts family.

The protein localises to the cytoplasm. Functionally, associates with the EF-Tu.GDP complex and induces the exchange of GDP to GTP. It remains bound to the aminoacyl-tRNA.EF-Tu.GTP complex up to the GTP hydrolysis stage on the ribosome. This is Elongation factor Ts from Bordetella bronchiseptica (strain ATCC BAA-588 / NCTC 13252 / RB50) (Alcaligenes bronchisepticus).